The primary structure comprises 40 residues: Antifungal protein ginkbilobin-1 (40 aa).

A Gnk2-homologous domain is found at 3–40 (TAFVSSAHNTQKIPAGAPFNRNLRAMLADLRQNAAFAG). An alpha-D-mannopyranose-binding site is contributed by Asn11.

In terms of tissue distribution, expressed in seeds (at the protein level).

Its function is as follows. Possesses antifungal activity against B.cinerea, M.arachidicola, F.oxysporum, R.solani and C.comatus and moderate antibacterial activity against S.aureus, P.aeruginosa and E.coli. Inhibits HIV-1 reverse transcriptase and proliferation of murine splenocytes. Exerts antifungal activity through its carbohydrate-binding specificity. The polypeptide is Antifungal protein ginkbilobin-1 (Ginkgo biloba (Ginkgo)).